We begin with the raw amino-acid sequence, 880 residues long: MSQPAGGRRKPRTLGPPVCSIRPFKSSEQYLEAMKEDLAEWLRDLYGLDIDAANFLQVLETGLVLCQHANVVTDAALAFLAEAPAQAQKIPMPRVGVSCNGAAQPGTFQARDNVSNFIQWCRKEMGIQEVLMFETEDLVLRKNVKNVVLCLLELGRRAWRFGVAAPTLVQLEEEIEEEVRRELALPPPDPSPPAPPRRQPCHFRNLDQMVQSLVSHCTCPVQFSMVKVSEGKYRVGDSNTLIFIRILRNHVMVRVGGGWDTLGHYLDKHDPCRCTSLSHKPGSFLKPPAPPVQHEVRVQDGPSQTQPTMTISRSQSPPPPVDWKTYTSSDRRLRPPTPSSPRPRRERGAGTGASREMAPFLRCQERSLIPSWRQPTAGDSPPSPQSSSTQKGRDPQCTSSGKREERYPPELPRGRIPTSWVHEETDSWGTDAGNPTPQRLRAIEATTKGISARGPSPLPRSFGPAECLGLRLPLRDEAKGAFFQFREPESVRSPTPVQGLTKIPIRLPPARPPTPGRSFPGATSGSPRTELGRDPIPLRAVTVDLAGSTHGDCSVEVRQEDQQLDIQVMAEARESWDLGLQEQEGRYTPLPLGGNKEQAIYCSLEEEILGNMKLLEVRSACPQGTRSGVIPRSGVYIPRLAGQWPEPGGPYDKAIQELAQGSPSLLKVDLEAWKAAPTGSPKPAVTPGPGSLKGKLGARQSGPRTKASLSAKGTHMRKVPPQGGQDCSASTVSASPEAPTPSPLDPNSDKAKACLSKGRRTLRKPKRVPSIYKLKLRPRIRPRRDHRPEKQPSRIPRPLAYVFLGPARQPPKDRLLRAVLGSKGGEASRVDGASVGEEEEEGKEEKEPAAPLESSPQPPEGLQPHWLNQAPLPPEEESWV.

One can recognise a Calponin-homology (CH) domain in the interval 32 to 159; sequence EAMKEDLAEW…CLLELGRRAW (128 aa). The disordered stretch occupies residues 180-200; sequence RRELALPPPDPSPPAPPRRQP. The span at 185–198 shows a compositional bias: pro residues; sequence LPPPDPSPPAPPRR. The 73-residue stretch at 201 to 273 folds into the GAR domain; it reads CHFRNLDQMV…HYLDKHDPCR (73 aa). 4 disordered regions span residues 283–360, 372–437, 489–533, and 676–880; these read SFLK…MAPF, WRQP…NPTP, ESVR…ELGR, and APTG…ESWV. The span at 301–315 shows a compositional bias: polar residues; sequence GPSQTQPTMTISRSQ. The interaction with ADORA2A stretch occupies residues 438 to 880; it reads QRLRAIEATT…PLPPEEESWV (443 aa). Pro residues predominate over residues 506–515; sequence RLPPARPPTP. The segment covering 725-734 has biased composition (polar residues); sequence QDCSASTVSA. 2 stretches are compositionally biased toward basic residues: residues 757–767 and 774–785; these read KGRRTLRKPKR and LKLRPRIRPRRD.

It belongs to the GAS2 family. In terms of assembly, interacts with ADORA2A (via its cytoplasmic C-terminal domain). Interacts with GNAS, GNAL, GNAQ, and GNA13. Interacts with MAPRE1. As to expression, expressed in bronchial and nasal epithelial cells (at protein level). Expressed in brain, kidney, lung, testis, fallopian tubes, and skeletal muscle. Expressed at low levels in stomach and colon.

Its subcellular location is the cytoplasm. It localises to the cytoskeleton. The protein localises to the cell membrane. It is found in the stress fiber. The protein resides in the cilium basal body. In terms of biological role, involved in the cross-linking of microtubules and microfilaments. Regulates microtubule dynamics and stability by interacting with microtubule plus-end tracking proteins, such as MAPRE1, to regulate microtubule growth along actin stress fibers. Enhances ADORA2-mediated adenylyl cyclase activation by acting as a scaffold to recruit trimeric G-protein complexes to ADORA2A. Regulates ciliary orientation and performance in cells located in the airway. The polypeptide is GAS2-like protein 2 (GAS2L2) (Homo sapiens (Human)).